The sequence spans 205 residues: CMRF35-like molecule 2 (205 aa).

The signal sequence occupies residues 1-17 (MWLLPALLLLCLSGCLS). The region spanning 18-120 (LKGPGSVTGT…VLDSWSRDPS (103 aa)) is the Ig-like V-type domain. At 18 to 173 (LKGPGSVTGT…NSGFRLSSPH (156 aa)) the chain is on the extracellular side. C36 and C104 are disulfide-bonded. A glycan (N-linked (GlcNAc...) asparagine) is linked at N154. The helical transmembrane segment at 174 to 194 (FLLVVLLKLPLLLSMLGAVFW) threads the bilayer. Residues 195-205 (VNRPQWAPPGR) are Cytoplasmic-facing.

This sequence belongs to the CD300 family. As to quaternary structure, interacts with TYROBP. N-glycosylated. In terms of tissue distribution, present on the surface of mature hematopoietic cells of the monocyte and myeloid lineages (at protein level).

Its subcellular location is the cell membrane. Functionally, probably acts as an activating receptor. This chain is CMRF35-like molecule 2 (CD300E), found in Homo sapiens (Human).